The sequence spans 137 residues: Putative FERT-1 protein (137 aa).

The chain is Putative FERT-1 protein (FERT-1) from Ascaris suum (Pig roundworm).